Consider the following 135-residue polypeptide: uncharacterized protein (135 aa).

The protein belongs to the MG067/MG068/MG395 family.

This is an uncharacterized protein from Mycoplasma pneumoniae (strain ATCC 29342 / M129 / Subtype 1) (Mycoplasmoides pneumoniae).